Reading from the N-terminus, the 525-residue chain is Cytochrome P450 4V2 (525 aa).

A helical membrane pass occupies residues 14–34; the sequence is LLWGAASAVSLAGATILISIF. Heme contacts are provided by E329 and C467.

This sequence belongs to the cytochrome P450 family. The cofactor is heme.

The protein localises to the endoplasmic reticulum membrane. It carries out the reaction dodecanoate + reduced [NADPH--hemoprotein reductase] + O2 = 12-hydroxydodecanoate + oxidized [NADPH--hemoprotein reductase] + H2O + H(+). The catalysed reaction is tetradecanoate + reduced [NADPH--hemoprotein reductase] + O2 = 14-hydroxytetradecanoate + oxidized [NADPH--hemoprotein reductase] + H2O + H(+). The enzyme catalyses hexadecanoate + reduced [NADPH--hemoprotein reductase] + O2 = 16-hydroxyhexadecanoate + oxidized [NADPH--hemoprotein reductase] + H2O + H(+). It catalyses the reaction (5Z,8Z,11Z,14Z,17Z)-eicosapentaenoate + reduced [NADPH--hemoprotein reductase] + O2 = 20-hydroxy-(5Z,8Z,11Z,14Z,17Z)-eicosapentaenoate + oxidized [NADPH--hemoprotein reductase] + H2O + H(+). It carries out the reaction (4Z,7Z,10Z,13Z,16Z,19Z)-docosahexaenoate + reduced [NADPH--hemoprotein reductase] + O2 = 22-hydroxy-(4Z,7Z,10Z,13Z,16Z,19Z)-docosahexaenoate + oxidized [NADPH--hemoprotein reductase] + H2O + H(+). It participates in lipid metabolism; fatty acid metabolism. Inhibited by N-hydroxy-N'-(4-n-butyl-2-methylphenyl formamidine)(HET0016) with an IC(50) of 38 nM. In terms of biological role, a cytochrome P450 monooxygenase involved in fatty acid metabolism in the eye. Catalyzes the omega-hydroxylation of polyunsaturated fatty acids (PUFAs) docosahexaenoate (DHA) and its precursor eicosapentaenoate (EPA), and may contribute to the homeostasis of these retinal PUFAs. Omega hydroxylates saturated fatty acids such as laurate, myristate and palmitate, the catalytic efficiency decreasing in the following order: myristate &gt; laurate &gt; palmitate (C14&gt;C12&gt;C16). Mechanistically, uses molecular oxygen inserting one oxygen atom into a substrate, and reducing the second into a water molecule, with two electrons provided by NADPH via cytochrome P450 reductase (CPR; NADPH-ferrihemoprotein reductase). The polypeptide is Cytochrome P450 4V2 (Cyp4v2) (Mus musculus (Mouse)).